We begin with the raw amino-acid sequence, 144 residues long: Maximins 4/H3 type 1 (144 aa).

Residues M1–A18 form the signal peptide. The propeptide occupies R19–R43. N70 bears the Asparagine amide mark. Residues T74 to R123 constitute a propeptide that is removed on maturation. I143 bears the Isoleucine amide mark.

It belongs to the bombinin family. Expressed by the skin glands.

It is found in the secreted. Its function is as follows. Maximin-4 shows antibacterial activity against both Gram-positive and Gram-negative bacteria. It also shows antimicrobial activity against the fungus C.albicans, but not against A.flavus nor P.uticale. It has little hemolytic activity. It does not possess a significant cytotoxicity against tumor cell lines. It does not possess a significant anti-HIV activity. Maximin-H3 shows antibacterial activity against both Gram-positive and Gram-negative bacteria. It also shows antimicrobial activity against the fungus C.albicans. Shows strong hemolytic activity. The protein is Maximins 4/H3 type 1 of Bombina maxima (Giant fire-bellied toad).